A 502-amino-acid chain; its full sequence is Glycerol kinase (502 aa).

ADP is bound at residue Thr13. ATP-binding residues include Thr13, Thr14, and Ser15. Thr13 provides a ligand contact to sn-glycerol 3-phosphate. Arg17 serves as a coordination point for ADP. Residues Arg83, Glu84, Tyr135, and Asp245 each coordinate sn-glycerol 3-phosphate. Residues Arg83, Glu84, Tyr135, Asp245, and Gln246 each coordinate glycerol. ADP is bound by residues Thr267 and Gly310. Thr267, Gly310, Gln314, and Gly411 together coordinate ATP. ADP is bound by residues Gly411 and Asn415.

The protein belongs to the FGGY kinase family. In terms of assembly, homotetramer and homodimer (in equilibrium).

The enzyme catalyses glycerol + ATP = sn-glycerol 3-phosphate + ADP + H(+). It functions in the pathway polyol metabolism; glycerol degradation via glycerol kinase pathway; sn-glycerol 3-phosphate from glycerol: step 1/1. Its activity is regulated as follows. Activated by phosphorylation and inhibited by fructose 1,6-bisphosphate (FBP). Functionally, key enzyme in the regulation of glycerol uptake and metabolism. Catalyzes the phosphorylation of glycerol to yield sn-glycerol 3-phosphate. This Lactobacillus delbrueckii subsp. bulgaricus (strain ATCC BAA-365 / Lb-18) protein is Glycerol kinase.